Consider the following 508-residue polypeptide: Hydroxymethylglutaryl-CoA synthase, mitochondrial (508 aa).

Residues 1-37 (MQRLLTPVRQVLRVKRAMQEASFMPPLLPPAAHQRFS) constitute a mitochondrion transit peptide. At Lys52 the chain carries N6-succinyllysine. The (3S)-3-hydroxy-3-methylglutaryl-CoA site is built by Glu80 and Ala81. Glu132 acts as the Proton donor/acceptor in catalysis. The (3S)-3-hydroxy-3-methylglutaryl-CoA site is built by Cys166, Asn204, and Thr208. Catalysis depends on Cys166, which acts as the Acyl-thioester intermediate. The residue at position 243 (Lys243) is an N6-acetyllysine. Lys256 is modified (N6-acetyllysine; alternate). Lys256 carries the N6-succinyllysine; alternate modification. (3S)-3-hydroxy-3-methylglutaryl-CoA-binding residues include Ser258 and His301. Catalysis depends on His301, which acts as the Proton donor/acceptor. Lys306 bears the N6-acetyllysine mark. A (3S)-3-hydroxy-3-methylglutaryl-CoA-binding site is contributed by Lys310. Lys310 is subject to N6-acetyllysine; alternate. Lys310 is subject to N6-succinyllysine; alternate. At Lys333 the chain carries N6-succinyllysine. N6-acetyllysine; alternate is present on residues Lys342, Lys350, Lys354, and Lys358. 4 positions are modified to N6-succinyllysine; alternate: Lys342, Lys350, Lys354, and Lys358. Residues Asn380 and Ser414 each coordinate (3S)-3-hydroxy-3-methylglutaryl-CoA. The residue at position 433 (Ser433) is a Phosphoserine. Lys437 carries the post-translational modification N6-acetyllysine. Residues Ser440 and Ser456 each carry the phosphoserine modification. Lys473 carries the post-translational modification N6-acetyllysine; alternate. Lys473 is subject to N6-succinyllysine; alternate.

It belongs to the thiolase-like superfamily. HMG-CoA synthase family. Homodimer. In terms of processing, succinylated. Desuccinylated by SIRT5. Succinylation, at least at Lys-310, inhibits the enzymatic activity.

The protein resides in the mitochondrion. It carries out the reaction acetoacetyl-CoA + acetyl-CoA + H2O = (3S)-3-hydroxy-3-methylglutaryl-CoA + CoA + H(+). Its pathway is metabolic intermediate biosynthesis; (R)-mevalonate biosynthesis; (R)-mevalonate from acetyl-CoA: step 2/3. Functionally, catalyzes the first irreversible step in ketogenesis, condensing acetyl-CoA to acetoacetyl-CoA to form HMG-CoA, which is converted by HMG-CoA reductase (HMGCR) into mevalonate. The chain is Hydroxymethylglutaryl-CoA synthase, mitochondrial (HMGCS2) from Sus scrofa (Pig).